A 435-amino-acid polypeptide reads, in one-letter code: Methylenetetrahydrofolate--tRNA-(uracil-5-)-methyltransferase TrmFO (435 aa).

9-14 (GAGLAG) contributes to the FAD binding site.

The protein belongs to the MnmG family. TrmFO subfamily. The cofactor is FAD.

The protein resides in the cytoplasm. It catalyses the reaction uridine(54) in tRNA + (6R)-5,10-methylene-5,6,7,8-tetrahydrofolate + NADH + H(+) = 5-methyluridine(54) in tRNA + (6S)-5,6,7,8-tetrahydrofolate + NAD(+). The catalysed reaction is uridine(54) in tRNA + (6R)-5,10-methylene-5,6,7,8-tetrahydrofolate + NADPH + H(+) = 5-methyluridine(54) in tRNA + (6S)-5,6,7,8-tetrahydrofolate + NADP(+). Functionally, catalyzes the folate-dependent formation of 5-methyl-uridine at position 54 (M-5-U54) in all tRNAs. The protein is Methylenetetrahydrofolate--tRNA-(uracil-5-)-methyltransferase TrmFO of Enterococcus faecalis (strain ATCC 700802 / V583).